The chain runs to 662 residues: UvrABC system protein B (662 aa).

Positions 25 to 414 (AGLNSKKRSQ…GTVVELIIRP (390 aa)) constitute a Helicase ATP-binding domain. 38–45 (GITGSGKT) is an ATP binding site. A Beta-hairpin motif is present at residues 91 to 114 (YYDYYQPEAYIVRTDTFIEKDSSI). In terms of domain architecture, Helicase C-terminal spans 430–592 (QVEDLISEIQ…IIPKTINSAI (163 aa)). The UVR domain maps to 622–657 (KSYMDKLKKEMFKAASNLEFEQAAKLRNQLKTLEKA).

The protein belongs to the UvrB family. In terms of assembly, forms a heterotetramer with UvrA during the search for lesions. Interacts with UvrC in an incision complex.

It is found in the cytoplasm. Functionally, the UvrABC repair system catalyzes the recognition and processing of DNA lesions. A damage recognition complex composed of 2 UvrA and 2 UvrB subunits scans DNA for abnormalities. Upon binding of the UvrA(2)B(2) complex to a putative damaged site, the DNA wraps around one UvrB monomer. DNA wrap is dependent on ATP binding by UvrB and probably causes local melting of the DNA helix, facilitating insertion of UvrB beta-hairpin between the DNA strands. Then UvrB probes one DNA strand for the presence of a lesion. If a lesion is found the UvrA subunits dissociate and the UvrB-DNA preincision complex is formed. This complex is subsequently bound by UvrC and the second UvrB is released. If no lesion is found, the DNA wraps around the other UvrB subunit that will check the other stand for damage. The protein is UvrABC system protein B of Rickettsia typhi (strain ATCC VR-144 / Wilmington).